An 837-amino-acid polypeptide reads, in one-letter code: Protein translocase subunit SecA (837 aa).

ATP is bound by residues Gln85, 103–107 (GEGKT), and Asp493. Residues Cys821, Cys823, Cys832, and His833 each contribute to the Zn(2+) site.

It belongs to the SecA family. As to quaternary structure, monomer and homodimer. Part of the essential Sec protein translocation apparatus which comprises SecA, SecYEG and auxiliary proteins SecDF. Other proteins may also be involved. Zn(2+) serves as cofactor.

Its subcellular location is the cell membrane. It is found in the cytoplasm. The catalysed reaction is ATP + H2O + cellular proteinSide 1 = ADP + phosphate + cellular proteinSide 2.. Functionally, part of the Sec protein translocase complex. Interacts with the SecYEG preprotein conducting channel. Has a central role in coupling the hydrolysis of ATP to the transfer of proteins into and across the cell membrane, serving as an ATP-driven molecular motor driving the stepwise translocation of polypeptide chains across the membrane. The polypeptide is Protein translocase subunit SecA (Streptococcus pneumoniae serotype 2 (strain D39 / NCTC 7466)).